Here is a 125-residue protein sequence, read N- to C-terminus: Late histone H2A.1 (125 aa).

Over residues 1-18 (MSGRGKGKAKGTKSKTRS) the composition is skewed to basic residues. Positions 1 to 21 (MSGRGKGKAKGTKSKTRSSRA) are disordered. S2 is subject to N-acetylserine. A Phosphoserine modification is found at S2. Q104 is subject to N5-methylglutamine. K119 participates in a covalent cross-link: Glycyl lysine isopeptide (Lys-Gly) (interchain with G-Cter in ubiquitin).

The protein belongs to the histone H2A family. The nucleosome is a histone octamer containing two molecules each of H2A, H2B, H3 and H4 assembled in one H3-H4 heterotetramer and two H2A-H2B heterodimers. The octamer wraps approximately 147 bp of DNA. Post-translationally, monoubiquitination of Lys-119 gives a specific tag for epigenetic transcriptional repression. Phosphorylation of Ser-2 directly represses transcription.

Its subcellular location is the nucleus. The protein resides in the chromosome. Its function is as follows. Core component of nucleosome. Nucleosomes wrap and compact DNA into chromatin, limiting DNA accessibility to the cellular machineries which require DNA as a template. Histones thereby play a central role in transcription regulation, DNA repair, DNA replication and chromosomal stability. DNA accessibility is regulated via a complex set of post-translational modifications of histones, also called histone code, and nucleosome remodeling. This chain is Late histone H2A.1, found in Psammechinus miliaris (Green sea urchin).